The following is a 226-amino-acid chain: Glutathione peroxidase 3 (226 aa).

An N-terminal signal peptide occupies residues M1 to G24. Residue U73 is part of the active site. Position 73 (U73) is a non-standard amino acid, selenocysteine.

The protein belongs to the glutathione peroxidase family. Homotetramer. Secreted in plasma.

It is found in the secreted. It carries out the reaction 2 glutathione + H2O2 = glutathione disulfide + 2 H2O. The catalysed reaction is tert-butyl hydroperoxide + 2 glutathione = tert-butanol + glutathione disulfide + H2O. In terms of biological role, protects cells and enzymes from oxidative damage, by catalyzing the reduction of hydrogen peroxide, lipid peroxides and organic hydroperoxide, by glutathione. The sequence is that of Glutathione peroxidase 3 from Sapajus apella (Brown-capped capuchin).